The primary structure comprises 391 residues: Phosphoglycerate kinase (391 aa).

Residues 21–23, Arg36, 59–62, Arg113, and Arg146 each bind substrate; these read DLN and HLGR. ATP contacts are provided by residues Lys197, Glu319, and 345–348; that span reads GGDT.

This sequence belongs to the phosphoglycerate kinase family. In terms of assembly, monomer.

It is found in the cytoplasm. It catalyses the reaction (2R)-3-phosphoglycerate + ATP = (2R)-3-phospho-glyceroyl phosphate + ADP. The protein operates within carbohydrate degradation; glycolysis; pyruvate from D-glyceraldehyde 3-phosphate: step 2/5. In Xylella fastidiosa (strain 9a5c), this protein is Phosphoglycerate kinase.